The chain runs to 151 residues: Nucleoside diphosphate kinase (151 aa).

Residues Lys10, Phe58, Arg86, Thr92, Arg103, and Asn113 each coordinate ATP. The active-site Pros-phosphohistidine intermediate is the His116.

This sequence belongs to the NDK family. In terms of assembly, homotetramer. Mg(2+) serves as cofactor.

Its subcellular location is the cytoplasm. The catalysed reaction is dZDP + ATP = dZTP + ADP. It carries out the reaction a 2'-deoxyribonucleoside 5'-diphosphate + ATP = a 2'-deoxyribonucleoside 5'-triphosphate + ADP. It catalyses the reaction a ribonucleoside 5'-diphosphate + ATP = a ribonucleoside 5'-triphosphate + ADP. Its pathway is purine metabolism. In terms of biological role, major role in the synthesis of nucleoside triphosphates other than ATP. The ATP gamma phosphate is transferred to the NDP beta phosphate via a ping-pong mechanism, using a phosphorylated active-site intermediate. Its function is as follows. (Microbial infection) Catalyzes the phosphorylation of dZDP to dZTP, when the bacterium is infected by a phage that produces the substrate for the synthesis of dZTP (2- amino-2'-deoxyadenosine 5'-triphosphate), which is then used by the phage as a DNA polymerase substrate. The protein is Nucleoside diphosphate kinase of Synechococcus sp. (strain CC9605).